The sequence spans 369 residues: 3-isopropylmalate dehydrogenase (369 aa).

Positions 98, 108, 136, and 227 each coordinate substrate. Positions 227, 251, and 255 each coordinate Mg(2+). 290 to 302 provides a ligand contact to NAD(+); that stretch reads GSAPDIAGKGIAN.

The protein belongs to the isocitrate and isopropylmalate dehydrogenases family. LeuB type 1 subfamily. As to quaternary structure, homodimer. It depends on Mg(2+) as a cofactor. Requires Mn(2+) as cofactor.

Its subcellular location is the cytoplasm. The catalysed reaction is (2R,3S)-3-isopropylmalate + NAD(+) = 4-methyl-2-oxopentanoate + CO2 + NADH. Its pathway is amino-acid biosynthesis; L-leucine biosynthesis; L-leucine from 3-methyl-2-oxobutanoate: step 3/4. In terms of biological role, catalyzes the oxidation of 3-carboxy-2-hydroxy-4-methylpentanoate (3-isopropylmalate) to 3-carboxy-4-methyl-2-oxopentanoate. The product decarboxylates to 4-methyl-2 oxopentanoate. The sequence is that of 3-isopropylmalate dehydrogenase from Gluconobacter oxydans (strain 621H) (Gluconobacter suboxydans).